We begin with the raw amino-acid sequence, 307 residues long: Acetyl-coenzyme A carboxylase carboxyl transferase subunit beta (307 aa).

Residues 28–297 (LWVKCPDTGQ…TPQPGTAPEP (270 aa)) form the CoA carboxyltransferase N-terminal domain. Residues 286–307 (RRTPQPGTAPEPTTPEPLPNAA) are disordered. A compositionally biased stretch (pro residues) spans 292 to 307 (GTAPEPTTPEPLPNAA).

It belongs to the AccD/PCCB family. As to quaternary structure, acetyl-CoA carboxylase is a heterohexamer composed of biotin carboxyl carrier protein (AccB), biotin carboxylase (AccC) and two subunits each of ACCase subunit alpha (AccA) and ACCase subunit beta (AccD).

It is found in the cytoplasm. The enzyme catalyses N(6)-carboxybiotinyl-L-lysyl-[protein] + acetyl-CoA = N(6)-biotinyl-L-lysyl-[protein] + malonyl-CoA. It functions in the pathway lipid metabolism; malonyl-CoA biosynthesis; malonyl-CoA from acetyl-CoA: step 1/1. Functionally, component of the acetyl coenzyme A carboxylase (ACC) complex. Biotin carboxylase (BC) catalyzes the carboxylation of biotin on its carrier protein (BCCP) and then the CO(2) group is transferred by the transcarboxylase to acetyl-CoA to form malonyl-CoA. This Methylorubrum extorquens (strain CM4 / NCIMB 13688) (Methylobacterium extorquens) protein is Acetyl-coenzyme A carboxylase carboxyl transferase subunit beta.